Reading from the N-terminus, the 702-residue chain is Polyribonucleotide nucleotidyltransferase (702 aa).

Positions 491 and 497 each coordinate Mg(2+). Residues 558–618 (PKMKTFMIPV…TAIEKAYQLI (61 aa)) enclose the KH domain. Positions 628-696 (GEKIIGPVVK…GKGKIKLQLI (69 aa)) constitute an S1 motif domain.

It belongs to the polyribonucleotide nucleotidyltransferase family. Requires Mg(2+) as cofactor.

Its subcellular location is the cytoplasm. The catalysed reaction is RNA(n+1) + phosphate = RNA(n) + a ribonucleoside 5'-diphosphate. Functionally, involved in mRNA degradation. Catalyzes the phosphorolysis of single-stranded polyribonucleotides processively in the 3'- to 5'-direction. The polypeptide is Polyribonucleotide nucleotidyltransferase (Spiroplasma citri).